Here is a 1026-residue protein sequence, read N- to C-terminus: Translation initiation factor IF-2, chloroplastic (1026 aa).

The N-terminal 63 residues, 1–63 (MPSMLVLVGT…KKWLCRYSVS (63 aa)), are a transit peptide targeting the chloroplast. The span at 158-173 (AEKLEIPKPGNKEGGE) shows a compositional bias: basic and acidic residues. Disordered regions lie at residues 158–208 (AEKL…TMKS), 230–284 (FNRG…PPVK), and 300–393 (VSEE…KWSK). A compositionally biased stretch (polar residues) spans 178–194 (SQPSANSSNSRNGSYAN). The span at 254-269 (LAPPQPPFRPQPPVRP) shows a compositional bias: pro residues. Basic and acidic residues predominate over residues 306–317 (SSVKSKERKPIL). A compositionally biased stretch (basic residues) spans 384 to 393 (SGRKGRKWSK). Positions 499–672 (DRPPVITIMG…MLVAELQELK (174 aa)) constitute a tr-type G domain. Positions 508–515 (GHVDHGKT) are G1. 508–515 (GHVDHGKT) contacts GTP. The interval 533–537 (GITQG) is G2. A G3 region spans residues 558–561 (DTPG). GTP contacts are provided by residues 558–562 (DTPGH) and 612–615 (NKID). Residues 612–615 (NKID) form a G4 region. Positions 648–650 (SAL) are G5.

Belongs to the TRAFAC class translation factor GTPase superfamily. Classic translation factor GTPase family. IF-2 subfamily.

Its subcellular location is the plastid. The protein resides in the chloroplast. One of the essential components for the initiation of protein synthesis. Protects formylmethionyl-tRNA from spontaneous hydrolysis and promotes its binding to the 30S ribosomal subunits. Also involved in the hydrolysis of GTP during the formation of the 70S ribosomal complex. The polypeptide is Translation initiation factor IF-2, chloroplastic (Arabidopsis thaliana (Mouse-ear cress)).